An 888-amino-acid chain; its full sequence is Alanine--tRNA ligase (888 aa).

Zn(2+)-binding residues include His-564, His-568, Cys-676, and His-680.

The protein belongs to the class-II aminoacyl-tRNA synthetase family. Zn(2+) is required as a cofactor.

It is found in the cytoplasm. It catalyses the reaction tRNA(Ala) + L-alanine + ATP = L-alanyl-tRNA(Ala) + AMP + diphosphate. Catalyzes the attachment of alanine to tRNA(Ala) in a two-step reaction: alanine is first activated by ATP to form Ala-AMP and then transferred to the acceptor end of tRNA(Ala). Also edits incorrectly charged Ser-tRNA(Ala) and Gly-tRNA(Ala) via its editing domain. This Mesorhizobium japonicum (strain LMG 29417 / CECT 9101 / MAFF 303099) (Mesorhizobium loti (strain MAFF 303099)) protein is Alanine--tRNA ligase.